We begin with the raw amino-acid sequence, 42 residues long: Proline-rich antimicrobial peptide 2 (42 aa).

In terms of tissue distribution, hemolymph.

The protein localises to the secreted. Antimicrobial protein. Has antibacterial activity against the Gram-positive bacterium M.luteus (MIC=8.6 uM). Lacks antibacterial activity against the Gram-positive bacteria B.circulans, L.monocytogenes, S.aureus, and S.lutea, and the Gram-negative bacteria E.coli D31, E.coli ATCC 25922, and S.typhimurium. Lacks antifungal activity against S.cerevisiae, P.pastoris, Z.marxianus, C.albicans, C.fructus, C.wickerhamii, A.niger, F.oxysporum, and T.harizianum. This is Proline-rich antimicrobial peptide 2 from Galleria mellonella (Greater wax moth).